The chain runs to 255 residues: Ribonuclease HII (255 aa).

The RNase H type-2 domain maps to 72 to 255 (AIICGIDEVG…KSFEPIKSLL (184 aa)). Residues Asp-78, Glu-79, and Asp-170 each contribute to the a divalent metal cation site.

It belongs to the RNase HII family. Mn(2+) serves as cofactor. The cofactor is Mg(2+).

Its subcellular location is the cytoplasm. It carries out the reaction Endonucleolytic cleavage to 5'-phosphomonoester.. Endonuclease that specifically degrades the RNA of RNA-DNA hybrids. This is Ribonuclease HII from Staphylococcus aureus (strain Mu3 / ATCC 700698).